Reading from the N-terminus, the 62-residue chain is Insect toxin BsIT4 (62 aa).

One can recognise an LCN-type CS-alpha/beta domain in the interval 1-62; the sequence is DGYIKGNKGC…WLYAATNTCG (62 aa). 4 disulfides stabilise this stretch: C10-C61, C14-C35, C21-C42, and C25-C44.

It belongs to the long (4 C-C) scorpion toxin superfamily. Sodium channel inhibitor family. Beta subfamily. Expressed by the venom gland.

Its subcellular location is the secreted. Depressant insect beta-toxins cause a transient contraction paralysis followed by a slow flaccid paralysis. They bind voltage-independently at site-4 of sodium channels (Nav) and shift the voltage of activation toward more negative potentials thereby affecting sodium channel activation and promoting spontaneous and repetitive firing. This toxin is active only on insects. The protein is Insect toxin BsIT4 of Hottentotta tamulus sindicus (Scorpion).